Here is a 464-residue protein sequence, read N- to C-terminus: Trigger factor (464 aa).

Residues 169–256 (GDVAIVDYRG…MKELKAKELP (88 aa)) form the PPIase FKBP-type domain.

It belongs to the FKBP-type PPIase family. Tig subfamily.

It localises to the cytoplasm. It carries out the reaction [protein]-peptidylproline (omega=180) = [protein]-peptidylproline (omega=0). Its function is as follows. Involved in protein export. Acts as a chaperone by maintaining the newly synthesized protein in an open conformation. Functions as a peptidyl-prolyl cis-trans isomerase. This chain is Trigger factor, found in Microcystis aeruginosa (strain NIES-843 / IAM M-2473).